Consider the following 248-residue polypeptide: MILLISDLHLEQERPDITRAFLALLAGRARTAEALYILGDFFEAWIGDDAMSPFQRSICQALRELSDSGTRIFLMHGNRDFMLGKGFCKAAGCTLLSDPSVVQLNGEPVLLMHGDSLCTRDEGYMRMRRYLRHPLTLFILRHLPLSTRHKLARKLRNESRAQTRMKANDIVDVTPDEVPRIMQQFGVRTLVHGHTHRPAIHKLQIGDQSAKRIVLGDWDRQGWVLQVDEQGMNLGSFDFVPETVALLN.

Residues D7, H9, D40, N78, and H113 each contribute to the Mn(2+) site. 78–79 (NR) contributes to the substrate binding site. Substrate is bound by residues D121, S159, T163, K166, and H194. Mn(2+) is bound by residues H194 and H196.

It belongs to the LpxH family. Mn(2+) serves as cofactor.

It is found in the cell inner membrane. It catalyses the reaction UDP-2-N,3-O-bis[(3R)-3-hydroxytetradecanoyl]-alpha-D-glucosamine + H2O = 2-N,3-O-bis[(3R)-3-hydroxytetradecanoyl]-alpha-D-glucosaminyl 1-phosphate + UMP + 2 H(+). Its pathway is glycolipid biosynthesis; lipid IV(A) biosynthesis; lipid IV(A) from (3R)-3-hydroxytetradecanoyl-[acyl-carrier-protein] and UDP-N-acetyl-alpha-D-glucosamine: step 4/6. In terms of biological role, hydrolyzes the pyrophosphate bond of UDP-2,3-diacylglucosamine to yield 2,3-diacylglucosamine 1-phosphate (lipid X) and UMP by catalyzing the attack of water at the alpha-P atom. Involved in the biosynthesis of lipid A, a phosphorylated glycolipid that anchors the lipopolysaccharide to the outer membrane of the cell. This chain is UDP-2,3-diacylglucosamine hydrolase, found in Pseudomonas syringae pv. tomato (strain ATCC BAA-871 / DC3000).